We begin with the raw amino-acid sequence, 358 residues long: Putative ZDHHC-type palmitoyltransferase 4 (358 aa).

The next 4 membrane-spanning stretches (helical) occupy residues 28–48 (FVGFATSLITLIAITYFTIIF), 57–77 (LFFIFNFFCDLSISLFLTYGI), 171–191 (YFFLFLSYLWVSVCYVLAHSL), and 210–230 (LLVIISSIGSFITFVAVGSFG). One can recognise a DHHC domain in the interval 127 to 177 (SYCKKCSKAKPPRCHHCSVCDKCVLKMDHHCPWIGGCVGFYNYRYFFLFLS). 2 N-linked (GlcNAc...) asparagine glycosylation sites follow: Asn255 and Asn296. The tract at residues 302–358 (NNKNNENNENNENNEIDNHNNNNNNNNNNNNNEKEDNINENDNLISYDTDEYNRHKK) is disordered. Low complexity predominate over residues 305 to 332 (NNENNENNENNEIDNHNNNNNNNNNNNN).

Belongs to the DHHC palmitoyltransferase family.

Its subcellular location is the membrane. The enzyme catalyses L-cysteinyl-[protein] + hexadecanoyl-CoA = S-hexadecanoyl-L-cysteinyl-[protein] + CoA. This Dictyostelium discoideum (Social amoeba) protein is Putative ZDHHC-type palmitoyltransferase 4.